The following is a 392-amino-acid chain: Heat-inducible transcription repressor HrcA (392 aa).

Belongs to the HrcA family.

Functionally, negative regulator of class I heat shock genes (grpE-dnaK-dnaJ and groELS operons). Prevents heat-shock induction of these operons. The polypeptide is Heat-inducible transcription repressor HrcA (Chlamydia trachomatis serovar A (strain ATCC VR-571B / DSM 19440 / HAR-13)).